Consider the following 67-residue polypeptide: ATP synthase F(0) complex subunit 8 (67 aa).

Residues 8–24 form a helical membrane-spanning segment; sequence TWFTTILATITTLFILF. At Lys54 the chain carries N6-acetyllysine; alternate. The residue at position 54 (Lys54) is an N6-succinyllysine; alternate. At Lys57 the chain carries N6-acetyllysine.

It belongs to the ATPase protein 8 family. As to quaternary structure, component of the ATP synthase complex composed at least of ATP5F1A/subunit alpha, ATP5F1B/subunit beta, ATP5MC1/subunit c (homooctomer), MT-ATP6/subunit a, MT-ATP8/subunit 8, ATP5ME/subunit e, ATP5MF/subunit f, ATP5MG/subunit g, ATP5MK/subunit k, ATP5MJ/subunit j, ATP5F1C/subunit gamma, ATP5F1D/subunit delta, ATP5F1E/subunit epsilon, ATP5PF/subunit F6, ATP5PB/subunit b, ATP5PD/subunit d, ATP5PO/subunit OSCP. ATP synthase complex consists of a soluble F(1) head domain (subunits alpha(3) and beta(3)) - the catalytic core - and a membrane F(0) domain - the membrane proton channel (subunits c, a, 8, e, f, g, k and j). These two domains are linked by a central stalk (subunits gamma, delta, and epsilon) rotating inside the F1 region and a stationary peripheral stalk (subunits F6, b, d, and OSCP). Interacts with PRICKLE3.

The protein localises to the mitochondrion membrane. Subunit 8, of the mitochondrial membrane ATP synthase complex (F(1)F(0) ATP synthase or Complex V) that produces ATP from ADP in the presence of a proton gradient across the membrane which is generated by electron transport complexes of the respiratory chain. ATP synthase complex consist of a soluble F(1) head domain - the catalytic core - and a membrane F(1) domain - the membrane proton channel. These two domains are linked by a central stalk rotating inside the F(1) region and a stationary peripheral stalk. During catalysis, ATP synthesis in the catalytic domain of F(1) is coupled via a rotary mechanism of the central stalk subunits to proton translocation. In vivo, can only synthesize ATP although its ATP hydrolase activity can be activated artificially in vitro. Part of the complex F(0) domain. The chain is ATP synthase F(0) complex subunit 8 from Talpa europaea (European mole).